We begin with the raw amino-acid sequence, 84 residues long: Envelope small membrane protein (84 aa).

The Virion surface portion of the chain corresponds to 1–18; it reads MFMADAYFADTVWYVGQI. A helical transmembrane segment spans residues 19 to 39; it reads IFIVAICLLVIIVVVAFLATF. At 40–80 the chain is on the intravirion side; sequence KLCIQLCGMCNTLGLSPSIYVFNRGRQFYEFYNDVKPPVLD.

It belongs to the betacoronaviruses E protein family. In terms of assembly, homopentamer. Interacts with membrane protein M in the budding compartment of the host cell, which is located between endoplasmic reticulum and the Golgi complex. Interacts with Nucleoprotein.

The protein localises to the host Golgi apparatus membrane. Plays a central role in virus morphogenesis and assembly. Acts as a viroporin and self-assembles in host membranes forming pentameric protein-lipid pores that allow ion transport. Also plays a role in the induction of apoptosis. This is Envelope small membrane protein from Bos taurus (Bovine).